We begin with the raw amino-acid sequence, 423 residues long: Glutamyl-tRNA reductase (423 aa).

Substrate is bound by residues 49-52 (TCNR), S111, 116-118 (EPQ), and Q122. The active-site Nucleophile is C50. 191 to 196 (GAGEMS) contributes to the NADP(+) binding site.

Belongs to the glutamyl-tRNA reductase family. In terms of assembly, homodimer.

The enzyme catalyses (S)-4-amino-5-oxopentanoate + tRNA(Glu) + NADP(+) = L-glutamyl-tRNA(Glu) + NADPH + H(+). Its pathway is porphyrin-containing compound metabolism; protoporphyrin-IX biosynthesis; 5-aminolevulinate from L-glutamyl-tRNA(Glu): step 1/2. Its function is as follows. Catalyzes the NADPH-dependent reduction of glutamyl-tRNA(Glu) to glutamate 1-semialdehyde (GSA). This Syntrophus aciditrophicus (strain SB) protein is Glutamyl-tRNA reductase.